Here is a 447-residue protein sequence, read N- to C-terminus: Trigger factor (447 aa).

Residues 164–249 (GNQVTFDFEG…VKLVEKSKLP (86 aa)) form the PPIase FKBP-type domain.

Belongs to the FKBP-type PPIase family. Tig subfamily.

It localises to the cytoplasm. It carries out the reaction [protein]-peptidylproline (omega=180) = [protein]-peptidylproline (omega=0). Involved in protein export. Acts as a chaperone by maintaining the newly synthesized protein in an open conformation. Functions as a peptidyl-prolyl cis-trans isomerase. The sequence is that of Trigger factor from Psychrobacter arcticus (strain DSM 17307 / VKM B-2377 / 273-4).